The sequence spans 391 residues: Dual-specificity RNA methyltransferase RlmN (391 aa).

Glu112 acts as the Proton acceptor in catalysis. Residues 118–368 (ESDRGTLCIS…VRTPRGRDIL (251 aa)) enclose the Radical SAM core domain. Residues Cys125 and Cys371 are joined by a disulfide bond. [4Fe-4S] cluster contacts are provided by Cys132, Cys136, and Cys139. Residues 197–198 (GE), Ser229, 251–253 (SLH), and Asn328 each bind S-adenosyl-L-methionine. Cys371 acts as the S-methylcysteine intermediate in catalysis.

The protein belongs to the radical SAM superfamily. RlmN family. It depends on [4Fe-4S] cluster as a cofactor.

It localises to the cytoplasm. The catalysed reaction is adenosine(2503) in 23S rRNA + 2 reduced [2Fe-2S]-[ferredoxin] + 2 S-adenosyl-L-methionine = 2-methyladenosine(2503) in 23S rRNA + 5'-deoxyadenosine + L-methionine + 2 oxidized [2Fe-2S]-[ferredoxin] + S-adenosyl-L-homocysteine. The enzyme catalyses adenosine(37) in tRNA + 2 reduced [2Fe-2S]-[ferredoxin] + 2 S-adenosyl-L-methionine = 2-methyladenosine(37) in tRNA + 5'-deoxyadenosine + L-methionine + 2 oxidized [2Fe-2S]-[ferredoxin] + S-adenosyl-L-homocysteine. In terms of biological role, specifically methylates position 2 of adenine 2503 in 23S rRNA and position 2 of adenine 37 in tRNAs. m2A2503 modification seems to play a crucial role in the proofreading step occurring at the peptidyl transferase center and thus would serve to optimize ribosomal fidelity. In Beijerinckia indica subsp. indica (strain ATCC 9039 / DSM 1715 / NCIMB 8712), this protein is Dual-specificity RNA methyltransferase RlmN.